We begin with the raw amino-acid sequence, 244 residues long: Carboxy-S-adenosyl-L-methionine synthase (244 aa).

Residues tyrosine 41, 66–68 (GCS), asparagine 134, and arginine 201 each bind S-adenosyl-L-methionine.

This sequence belongs to the class I-like SAM-binding methyltransferase superfamily. Cx-SAM synthase family. As to quaternary structure, homodimer.

It catalyses the reaction prephenate + S-adenosyl-L-methionine = carboxy-S-adenosyl-L-methionine + 3-phenylpyruvate + H2O. Its function is as follows. Catalyzes the conversion of S-adenosyl-L-methionine (SAM) to carboxy-S-adenosyl-L-methionine (Cx-SAM). In Cellvibrio japonicus (strain Ueda107) (Pseudomonas fluorescens subsp. cellulosa), this protein is Carboxy-S-adenosyl-L-methionine synthase.